A 243-amino-acid chain; its full sequence is Leucyl/phenylalanyl-tRNA--protein transferase (243 aa).

Belongs to the L/F-transferase family.

It localises to the cytoplasm. The catalysed reaction is N-terminal L-lysyl-[protein] + L-leucyl-tRNA(Leu) = N-terminal L-leucyl-L-lysyl-[protein] + tRNA(Leu) + H(+). It carries out the reaction N-terminal L-arginyl-[protein] + L-leucyl-tRNA(Leu) = N-terminal L-leucyl-L-arginyl-[protein] + tRNA(Leu) + H(+). The enzyme catalyses L-phenylalanyl-tRNA(Phe) + an N-terminal L-alpha-aminoacyl-[protein] = an N-terminal L-phenylalanyl-L-alpha-aminoacyl-[protein] + tRNA(Phe). Its function is as follows. Functions in the N-end rule pathway of protein degradation where it conjugates Leu, Phe and, less efficiently, Met from aminoacyl-tRNAs to the N-termini of proteins containing an N-terminal arginine or lysine. The polypeptide is Leucyl/phenylalanyl-tRNA--protein transferase (Vibrio cholerae serotype O1 (strain ATCC 39315 / El Tor Inaba N16961)).